Reading from the N-terminus, the 166-residue chain is Regulatory protein RecX (166 aa).

Belongs to the RecX family.

The protein resides in the cytoplasm. In terms of biological role, modulates RecA activity. This is Regulatory protein RecX from Klebsiella pneumoniae subsp. pneumoniae (strain ATCC 700721 / MGH 78578).